The sequence spans 233 residues: Pyridoxal phosphate homeostasis protein (233 aa).

Lysine 36 bears the N6-(pyridoxal phosphate)lysine mark.

This sequence belongs to the pyridoxal phosphate-binding protein YggS/PROSC family.

Pyridoxal 5'-phosphate (PLP)-binding protein, which is involved in PLP homeostasis. In Vibrio alginolyticus, this protein is Pyridoxal phosphate homeostasis protein.